A 385-amino-acid polypeptide reads, in one-letter code: NADH-quinone oxidoreductase subunit D 2 (385 aa).

It belongs to the complex I 49 kDa subunit family. In terms of assembly, NDH-1 is composed of 14 different subunits. Subunits NuoB, C, D, E, F, and G constitute the peripheral sector of the complex.

The protein localises to the cell membrane. The catalysed reaction is a quinone + NADH + 5 H(+)(in) = a quinol + NAD(+) + 4 H(+)(out). Its function is as follows. NDH-1 shuttles electrons from NADH, via FMN and iron-sulfur (Fe-S) centers, to quinones in the respiratory chain. The immediate electron acceptor for the enzyme in this species is believed to be a menaquinone. Couples the redox reaction to proton translocation (for every two electrons transferred, four hydrogen ions are translocated across the cytoplasmic membrane), and thus conserves the redox energy in a proton gradient. This Salinispora arenicola (strain CNS-205) protein is NADH-quinone oxidoreductase subunit D 2.